Reading from the N-terminus, the 189-residue chain is UPF0301 protein CF0373 (189 aa).

This sequence belongs to the UPF0301 (AlgH) family.

The protein is UPF0301 protein CF0373 of Chlamydia felis (strain Fe/C-56) (Chlamydophila felis).